Reading from the N-terminus, the 172-residue chain is MEIGQYQPNLDGDGLRIGIVQSRFNEPVCNGLADACIEELERLGVTGEDVLLVTVPGALEIPLALQKLAESGQFDALIALGAVIRGETYHFELVSNESGSGISRIALDFGIPVANAVLTTENDEQAVARMTEKGRDAARTAVEMANLAVALEQLDGDEDDEGEGEDDEEERA.

5-amino-6-(D-ribitylamino)uracil is bound by residues F24, A58–E60, and A82–I84. Position 87–88 (E87–T88) interacts with (2S)-2-hydroxy-3-oxobutyl phosphate. Residue H90 is the Proton donor of the active site. N115 provides a ligand contact to 5-amino-6-(D-ribitylamino)uracil. R129 contacts (2S)-2-hydroxy-3-oxobutyl phosphate. Positions A150–A172 are disordered. Acidic residues predominate over residues L154 to A172.

The protein belongs to the DMRL synthase family.

It carries out the reaction (2S)-2-hydroxy-3-oxobutyl phosphate + 5-amino-6-(D-ribitylamino)uracil = 6,7-dimethyl-8-(1-D-ribityl)lumazine + phosphate + 2 H2O + H(+). The protein operates within cofactor biosynthesis; riboflavin biosynthesis; riboflavin from 2-hydroxy-3-oxobutyl phosphate and 5-amino-6-(D-ribitylamino)uracil: step 1/2. Catalyzes the formation of 6,7-dimethyl-8-ribityllumazine by condensation of 5-amino-6-(D-ribitylamino)uracil with 3,4-dihydroxy-2-butanone 4-phosphate. This is the penultimate step in the biosynthesis of riboflavin. This chain is 6,7-dimethyl-8-ribityllumazine synthase, found in Paraburkholderia phymatum (strain DSM 17167 / CIP 108236 / LMG 21445 / STM815) (Burkholderia phymatum).